A 579-amino-acid chain; its full sequence is Putative laccase-9 (579 aa).

An N-terminal signal peptide occupies residues Met-1–Gly-27. 2 consecutive Plastocyanin-like domains span residues Phe-36–Gly-152 and Lys-162–Ser-319. Asn-41 and Asn-82 each carry an N-linked (GlcNAc...) asparagine glycan. Residues His-86 and His-88 each coordinate Cu cation. N-linked (GlcNAc...) asparagine glycosylation occurs at Asn-114. Positions 131 and 133 each coordinate Cu cation. 3 N-linked (GlcNAc...) asparagine glycosylation sites follow: Asn-307, Asn-405, and Asn-446. A Plastocyanin-like 3 domain is found at Pro-436–Lys-563. Cu cation contacts are provided by His-480, His-483, and His-485. Asn-496 carries N-linked (GlcNAc...) asparagine glycosylation. 5 residues coordinate Cu cation: His-542, Cys-543, His-544, His-548, and Met-553.

Belongs to the multicopper oxidase family. Cu cation is required as a cofactor.

The protein localises to the secreted. It is found in the extracellular space. Its subcellular location is the apoplast. The enzyme catalyses 4 hydroquinone + O2 = 4 benzosemiquinone + 2 H2O. Its function is as follows. Lignin degradation and detoxification of lignin-derived products. The polypeptide is Putative laccase-9 (LAC9) (Oryza sativa subsp. japonica (Rice)).